Reading from the N-terminus, the 156-residue chain is Small ribosomal subunit protein uS7 (156 aa).

Belongs to the universal ribosomal protein uS7 family. As to quaternary structure, part of the 30S ribosomal subunit. Contacts proteins S9 and S11.

In terms of biological role, one of the primary rRNA binding proteins, it binds directly to 16S rRNA where it nucleates assembly of the head domain of the 30S subunit. Is located at the subunit interface close to the decoding center, probably blocks exit of the E-site tRNA. The chain is Small ribosomal subunit protein uS7 from Campylobacter fetus subsp. fetus (strain 82-40).